Here is a 338-residue protein sequence, read N- to C-terminus: MIRVAINGYGRIGRSILRALYESGKRQQIQIVAINELAKPEAIIHLTQYDTTHGRFQHKVKLVDNHMLIGDDAIKILHEPDAAKLPWREMDIDIVYEATGVILDRQSCEAHIHAGAKQVLISHPSSADVDGTIVYGVNHDLLRAGHTVVSNASCTTNCIVPVIDVLDKHFGVKSGAITTIHSAMNDQQVIDAYHDDLRRTRAAGQSIIPVDTKLARGIERILPHMKDKFEAISVRVPTINVTAIDLSVTLAKTVDIASVNQVLELAANGRFNGILGYTDEPLVSCDFNHDPRSSIVDGTQTRVSAGQLVKLLLWCDNEWGFANRMLDTSLAMIAAKQS.

11 to 12 (RI) contributes to the NAD(+) binding site. Residues 153–155 (SCT), arginine 199, 212–213 (TK), and arginine 235 contribute to the substrate site. The active-site Nucleophile is the cysteine 154. Asparagine 317 serves as a coordination point for NAD(+).

This sequence belongs to the glyceraldehyde-3-phosphate dehydrogenase family. Epd subfamily. Homotetramer.

The protein resides in the cytoplasm. The catalysed reaction is D-erythrose 4-phosphate + NAD(+) + H2O = 4-phospho-D-erythronate + NADH + 2 H(+). The protein operates within cofactor biosynthesis; pyridoxine 5'-phosphate biosynthesis; pyridoxine 5'-phosphate from D-erythrose 4-phosphate: step 1/5. Catalyzes the NAD-dependent conversion of D-erythrose 4-phosphate to 4-phosphoerythronate. The protein is D-erythrose-4-phosphate dehydrogenase of Shewanella putrefaciens (strain CN-32 / ATCC BAA-453).